Consider the following 321-residue polypeptide: Aspartate carbamoyltransferase catalytic subunit (321 aa).

Carbamoyl phosphate is bound by residues Arg-65 and Thr-66. Lys-93 is an L-aspartate binding site. Positions 115, 143, and 146 each coordinate carbamoyl phosphate. Residues Arg-176 and Arg-230 each coordinate L-aspartate. Residues Gly-271 and Pro-272 each coordinate carbamoyl phosphate.

The protein belongs to the aspartate/ornithine carbamoyltransferase superfamily. ATCase family. Heterododecamer (2C3:3R2) of six catalytic PyrB chains organized as two trimers (C3), and six regulatory PyrI chains organized as three dimers (R2).

It carries out the reaction carbamoyl phosphate + L-aspartate = N-carbamoyl-L-aspartate + phosphate + H(+). It functions in the pathway pyrimidine metabolism; UMP biosynthesis via de novo pathway; (S)-dihydroorotate from bicarbonate: step 2/3. Its function is as follows. Catalyzes the condensation of carbamoyl phosphate and aspartate to form carbamoyl aspartate and inorganic phosphate, the committed step in the de novo pyrimidine nucleotide biosynthesis pathway. The chain is Aspartate carbamoyltransferase catalytic subunit from Bartonella quintana (strain Toulouse) (Rochalimaea quintana).